We begin with the raw amino-acid sequence, 173 residues long: Calmodulin-like protein 11 (173 aa).

The segment covering 1 to 26 has biased composition (low complexity); sequence MEEIQQQQQQQQQQQQQQQQQQQQQQ. The disordered stretch occupies residues 1–27; the sequence is MEEIQQQQQQQQQQQQQQQQQQQQQQE. EF-hand domains follow at residues 31–66, 67–102, 104–139, and 140–173; these read EQIMEFKEAFCLFDKDGDGCITADELATVIRSLDQN, PTEQELQDMITEIDSDGNGTIEFSEFLNLMANQLQE, DADEELKEAFKVFDKDQNGYISASELRHVMINLGEK, and LTDEEVDQMIKEADLDGDGQVNYDEFVRMMMING. Residues Asp-44, Asp-46, Asp-48, Cys-50, Glu-55, Asp-80, Asp-82, Asn-84, Thr-86, Glu-91, Asp-117, Asp-119, Asn-121, Tyr-123, Glu-128, Asp-153, Asp-155, Asp-157, Gln-159, and Glu-164 each coordinate Ca(2+).

This sequence belongs to the calmodulin family.

Its function is as follows. Potential calcium sensor. This Arabidopsis thaliana (Mouse-ear cress) protein is Calmodulin-like protein 11 (CML11).